We begin with the raw amino-acid sequence, 507 residues long: E3 SUMO-protein ligase PIAS4 (507 aa).

Position 2 is an N-acetylalanine (A2). K9 is covalently cross-linked (Glycyl lysine isopeptide (Lys-Gly) (interchain with G-Cter in SUMO2)). In terms of domain architecture, SAP spans 12–46 (VMSFRVSDLQMLLGFVGRSKSGLKHELVTRALQLV). Positions 20 to 24 (LQMLL) match the LXXLL motif motif. A Glycyl lysine isopeptide (Lys-Gly) (interchain with G-Cter in SUMO); alternate cross-link involves residue K35. K35 is covalently cross-linked (Glycyl lysine isopeptide (Lys-Gly) (interchain with G-Cter in SUMO2); alternate). Glycyl lysine isopeptide (Lys-Gly) (interchain with G-Cter in SUMO2) cross-links involve residues K56, K59, K68, and K69. K107 is subject to N6-acetyllysine. Positions 112–272 (LGRLPTKTLK…SVALYLVRQL (161 aa)) constitute a PINIT domain. A Glycyl lysine isopeptide (Lys-Gly) (interchain with G-Cter in SUMO2) cross-link involves residue K118. K128 is covalently cross-linked (Glycyl lysine isopeptide (Lys-Gly) (interchain with G-Cter in SUMO)). The SP-RING-type zinc finger occupies 304-385 (PDSEIATTGV…LSKILSECEG (82 aa)). Residues C335, H337, C358, and C361 each contribute to the Zn(2+) site. Residues 426–507 (APASSTPGIG…PFQKGLVPAC (82 aa)) form a disordered region. The span at 434–450 (IGSGLSGPGSAGSGAGA) shows a compositional bias: gly residues. Acidic residues predominate over residues 474 to 489 (SEDEDEDEDDDEDEDE).

Belongs to the PIAS family. Interacts with AR, GATA2, LEF1, TP53 and STAT1 (IFNG-induced). Interacts with TICAM1. Interacts with MTA1. Interacts with PRDM1/Blimp-1. Interacts with TRIM32 upon treatment with UVB and TNF-alpha. In terms of assembly, (Microbial infection) Interacts ewith Moloney murine leukemia virus Capsid protein p30. Sumoylated. Lys-35 is the main site of sumoylation. Sumoylation is required for TCF4 sumoylation and transcriptional activation. Represses LEF1 transcriptional activity. SUMO1 is the preferred conjugate. Post-translationally, ubiquitinated by TRIM32 upon treatment with UVB and TNF-alpha. Widely expressed, with highest levels in testis. Also expressed in vascular endothelial cells, in primary keratinocytes and in the CNS, including cortex, olfactory bulb, spinal cord, thalamus and trigeminal ganglion. Low expression, if any, in liver and lung.

It is found in the nucleus. Its subcellular location is the PML body. It catalyses the reaction S-ubiquitinyl-[E2 ubiquitin-conjugating enzyme]-L-cysteine + [acceptor protein]-L-lysine = [E2 ubiquitin-conjugating enzyme]-L-cysteine + N(6)-ubiquitinyl-[acceptor protein]-L-lysine.. It participates in protein modification; protein sumoylation. Functions as an E3-type small ubiquitin-like modifier (SUMO) ligase, stabilizing the interaction between UBE2I and the substrate, and as a SUMO-tethering factor. Mediates sumoylation of ALKBH5, AXIN1, CEBPA, KLF8, GATA2, PARK7, HERC2, MYB, TCF4 and RNF168. Plays a crucial role as a transcriptional coregulation in various cellular pathways, including the STAT pathway, the p53/TP53 pathway, the Wnt pathway and the steroid hormone signaling pathway. Involved in gene silencing. In Wnt signaling, represses LEF1 and enhances TCF4 transcriptional activities through promoting their sumoylations. Enhances the sumoylation of MTA1 and may participate in its paralog-selective sumoylation. Binds to AT-rich DNA sequences, known as matrix or scaffold attachment regions (MARs/SARs). Catalyzes conjugation of SUMO2 to KAT5 in response to DNA damage, facilitating repair of DNA double-strand breaks (DSBs) via homologous recombination (HR). Mediates sumoylation of PARP1 in response to PARP1 trapping to chromatin. Mediates sumoylation of KLF8, repressiing KLF8 transcriptional activity and cell cycle progression into G(1) phase. Sumoylates ALKBH5 downstream of MAPK8/JNK1 and MAPK9/JNK2 in response to reactive oxygen species (ROS), inhibiting ALKBH5 RNA demethylase activity. The protein is E3 SUMO-protein ligase PIAS4 (Pias4) of Mus musculus (Mouse).